Reading from the N-terminus, the 400-residue chain is Integumentary mucin A.1 (400 aa).

An N-terminal signal peptide occupies residues Met-1 to Ala-20. P-type domains lie at Gln-21–Ala-64 and Leu-72–Thr-115. Intrachain disulfides connect Cys-23-Cys-49, Cys-33-Cys-48, and Cys-43-Cys-60. Asn-63 carries N-linked (GlcNAc...) asparagine glycosylation. Intrachain disulfides connect Cys-74–Cys-100, Cys-84–Cys-99, and Cys-94–Cys-111. Composition is skewed to low complexity over residues Pro-122–Pro-264 and Glu-272–Thr-299. Residues Pro-122–Pro-302 form a disordered region. Repeat copies occupy residues Ala-127 to Thr-135, Val-136 to Thr-144, Val-145 to Thr-153, Val-154 to Thr-162, Val-163 to Thr-171, Val-172 to Thr-180, Val-181 to Thr-189, Val-190 to Thr-198, Val-199 to Thr-207, Val-208 to Thr-216, Val-217 to Thr-225, Val-226 to Thr-234, Ala-235 to Thr-243, and Val-244 to Thr-252. Residues Ala-127–Asp-261 are 15 X 9 AA approximate tandem repeats of [AV]-[SP]-T-T-[AP]-E-T-T-T. The 1-15; approximate repeat unit spans residues Glu-253–Asp-261. 7 consecutive repeat copies span residues Glu-272–Thr-275, Glu-276–Thr-279, Glu-280–Thr-283, Glu-284–Thr-287, Glu-288–Thr-291, Glu-292–Thr-295, and Glu-296–Thr-299. Residues Glu-272–Thr-299 are 7 X 4 AA repeats of E-T-T-T. 2 P-type domains span residues Thr-298–Glu-343 and Ala-351–Ala-394. 5 cysteine pairs are disulfide-bonded: Cys-312/Cys-327, Cys-322/Cys-339, Cys-353/Cys-379, Cys-363/Cys-378, and Cys-373/Cys-390.

Extensively O-glycosylated. Consist of about 70% carbohydrate and 30% protein. In terms of tissue distribution, expressed and stored exclusively in mature mucous glands of the skin.

It localises to the secreted. Its function is as follows. Could be involved in defense against microbial infections. Protects the epithelia from external environment. The protein is Integumentary mucin A.1 of Xenopus laevis (African clawed frog).